The chain runs to 196 residues: Probable splicing factor, arginine/serine-rich 4 (196 aa).

The 79-residue stretch at 19–97 folds into the RRM domain; the sequence is TSLKIDNLSY…RELRVTLAKY (79 aa). Over residues 91 to 106 the composition is skewed to basic and acidic residues; it reads RVTLAKYDRPSDERGG. The interval 91–196 is disordered; the sequence is RVTLAKYDRP…SPSRSRSNSR (106 aa). Over residues 112–141 the composition is skewed to basic residues; sequence GRRRSRSPRRRSRSPRYSRSRSPRRSRSRT. Composition is skewed to basic and acidic residues over residues 145-160 and 167-176; these read PSRD…DNSR and PPREDGSPKE. Positions 184–196 are enriched in low complexity; it reads ASRSPSRSRSNSR.

It belongs to the splicing factor SR family. Extensively phosphorylated on serine residues in the RS domain.

It localises to the nucleus. May play a functionally redundant role in embryogenesis. The protein is Probable splicing factor, arginine/serine-rich 4 (rsp-4) of Caenorhabditis elegans.